A 526-amino-acid polypeptide reads, in one-letter code: Peptide chain release factor 3 (526 aa).

The tr-type G domain maps to 8–277 (NKRRTFAIIS…GLTEWAPKPQ (270 aa)). Residues 17–24 (SHPDAGKT), 85–89 (DTPGH), and 139–142 (NKLD) contribute to the GTP site.

Belongs to the TRAFAC class translation factor GTPase superfamily. Classic translation factor GTPase family. PrfC subfamily.

The protein resides in the cytoplasm. Functionally, increases the formation of ribosomal termination complexes and stimulates activities of RF-1 and RF-2. It binds guanine nucleotides and has strong preference for UGA stop codons. It may interact directly with the ribosome. The stimulation of RF-1 and RF-2 is significantly reduced by GTP and GDP, but not by GMP. The chain is Peptide chain release factor 3 from Actinobacillus pleuropneumoniae serotype 7 (strain AP76).